The sequence spans 304 residues: Coenzyme PQQ synthesis protein B (304 aa).

Belongs to the PqqB family.

It participates in cofactor biosynthesis; pyrroloquinoline quinone biosynthesis. Functionally, may be involved in the transport of PQQ or its precursor to the periplasm. This chain is Coenzyme PQQ synthesis protein B, found in Pseudomonas aeruginosa (strain ATCC 15692 / DSM 22644 / CIP 104116 / JCM 14847 / LMG 12228 / 1C / PRS 101 / PAO1).